The sequence spans 324 residues: Putative 12-oxophytodienoate reductase-like protein 1 (324 aa).

N-acetylmethionine is present on M1. Residues 14–16, A47, and Q89 each bind FMN; that span reads PMA. The segment covering 99–113 has biased composition (polar residues); sequence QDCQPNGESPVSSTD. Residues 99–128 are disordered; it reads QDCQPNGESPVSSTDKPFADDPSNEFTPPR. Residue 160–163 coordinates substrate; sequence HGAH. Y165 acts as the Proton donor in catalysis. R212 contributes to the FMN binding site. R252 contributes to the substrate binding site. Residues G282 and 303 to 304 each bind FMN; that span reads GR.

The protein belongs to the NADH:flavin oxidoreductase/NADH oxidase family. FMN is required as a cofactor.

In terms of biological role, putative oxophytodienoate reductase that may be involved in the biosynthesis or metabolism of oxylipin signaling molecules. This Arabidopsis thaliana (Mouse-ear cress) protein is Putative 12-oxophytodienoate reductase-like protein 1.